Reading from the N-terminus, the 399-residue chain is Methylthioribose kinase (399 aa).

ATP is bound by residues Asn-40, Lys-57, and Glu-111–Leu-113. Asp-229 contributes to the substrate binding site. Asp-246–Glu-248 is a binding site for ATP. Arg-344 contributes to the substrate binding site.

This sequence belongs to the methylthioribose kinase family. In terms of assembly, homodimer.

It carries out the reaction 5-(methylsulfanyl)-D-ribose + ATP = 5-(methylsulfanyl)-alpha-D-ribose 1-phosphate + ADP + H(+). The protein operates within amino-acid biosynthesis; L-methionine biosynthesis via salvage pathway; S-methyl-5-thio-alpha-D-ribose 1-phosphate from S-methyl-5'-thioadenosine (hydrolase route): step 2/2. Functionally, catalyzes the phosphorylation of methylthioribose into methylthioribose-1-phosphate. In Citrobacter koseri (strain ATCC BAA-895 / CDC 4225-83 / SGSC4696), this protein is Methylthioribose kinase.